A 414-amino-acid polypeptide reads, in one-letter code: Peptide chain release factor subunit 1 (414 aa).

It belongs to the eukaryotic release factor 1 family. Heterodimer of two subunits, one of which binds GTP.

Its subcellular location is the cytoplasm. Functionally, directs the termination of nascent peptide synthesis (translation) in response to the termination codons UAA, UAG and UGA. This chain is Peptide chain release factor subunit 1, found in Methanococcoides burtonii (strain DSM 6242 / NBRC 107633 / OCM 468 / ACE-M).